The chain runs to 447 residues: Phosphoglucosamine mutase (447 aa).

Ser106 serves as the catalytic Phosphoserine intermediate. 4 residues coordinate Mg(2+): Ser106, Asp245, Asp247, and Asp249. A Phosphoserine modification is found at Ser106.

Belongs to the phosphohexose mutase family. Requires Mg(2+) as cofactor. Activated by phosphorylation.

It catalyses the reaction alpha-D-glucosamine 1-phosphate = D-glucosamine 6-phosphate. In terms of biological role, catalyzes the conversion of glucosamine-6-phosphate to glucosamine-1-phosphate. This Cupriavidus pinatubonensis (strain JMP 134 / LMG 1197) (Cupriavidus necator (strain JMP 134)) protein is Phosphoglucosamine mutase.